A 194-amino-acid polypeptide reads, in one-letter code: Myelin-associated neurite-outgrowth inhibitor (194 aa).

Met1 carries the post-translational modification N-acetylmethionine. The Cytoplasmic portion of the chain corresponds to 1 to 18 (MNPVYSPGSSGVPYANAK). Ser6 bears the Phosphoserine mark. A helical transmembrane segment spans residues 19-41 (GIGYPAGFPVGYAAAPAYSPNMY). Residues 42 to 141 (PGANPTFQTG…PAPIPPPRGS (100 aa)) are Extracellular-facing. Residue Asn45 is glycosylated (N-linked (GlcNAc...) asparagine). A helical transmembrane segment spans residues 142–163 (GVTMGMVAGTTMAMSAGTLLTA). The Cytoplasmic segment spans residues 164–194 (HSPTPVAPHPVTVPTYRAPGTPTYSYVPPQW).

Belongs to the FAM168 family. In terms of assembly, may form homodimers. May interact with DAZAP2, FAM168A, PRDX6, RBM6, TMTC1 and YPEL2. Interacts with CDC27. Post-translationally, N-glycosylated. Predominantly expressed in the brain, including olfactory bulb, cortex and cerebellum (at protein level).

It localises to the cytoplasm. It is found in the perinuclear region. The protein resides in the cell membrane. The protein localises to the cell projection. Its subcellular location is the axon. In terms of biological role, inhibitor of neuronal axonal outgrowth. Acts as a negative regulator of CDC42 and STAT3 and a positive regulator of STMN2. Positive regulator of CDC27. This Mus musculus (Mouse) protein is Myelin-associated neurite-outgrowth inhibitor (Fam168b).